We begin with the raw amino-acid sequence, 215 residues long: Ribonuclease T (215 aa).

Residues 20–194 (VVIDVETAGF…YDTERTAVLF (175 aa)) enclose the Exonuclease domain. Residues D23, E25, H181, and D186 each coordinate Mg(2+). H181 serves as the catalytic Proton donor/acceptor.

The protein belongs to the RNase T family. In terms of assembly, homodimer. Mg(2+) is required as a cofactor.

Functionally, trims short 3' overhangs of a variety of RNA species, leaving a one or two nucleotide 3' overhang. Responsible for the end-turnover of tRNA: specifically removes the terminal AMP residue from uncharged tRNA (tRNA-C-C-A). Also appears to be involved in tRNA biosynthesis. The protein is Ribonuclease T of Salmonella paratyphi A (strain ATCC 9150 / SARB42).